The chain runs to 190 residues: CASP-like protein 2U2 (190 aa).

Residues M1 to G10 are Cytoplasmic-facing. Residues W11–L31 form a helical membrane-spanning segment. Topologically, residues K32–V59 are extracellular. The helical transmembrane segment at Y60–I80 threads the bilayer. Over P81–Q94 the chain is Cytoplasmic. A helical membrane pass occupies residues W95–A115. At T116–T144 the chain is on the extracellular side. A helical transmembrane segment spans residues V145–V165. Over S166–I190 the chain is Cytoplasmic.

This sequence belongs to the Casparian strip membrane proteins (CASP) family. As to quaternary structure, homodimer and heterodimers.

The protein resides in the cell membrane. This is CASP-like protein 2U2 from Pteridium aquilinum subsp. aquilinum (Bracken fern).